We begin with the raw amino-acid sequence, 326 residues long: Tetraacyldisaccharide 4'-kinase (326 aa).

Residue 53–60 participates in ATP binding; that stretch reads SVGGNGKT.

The protein belongs to the LpxK family.

It carries out the reaction a lipid A disaccharide + ATP = a lipid IVA + ADP + H(+). Its pathway is glycolipid biosynthesis; lipid IV(A) biosynthesis; lipid IV(A) from (3R)-3-hydroxytetradecanoyl-[acyl-carrier-protein] and UDP-N-acetyl-alpha-D-glucosamine: step 6/6. Transfers the gamma-phosphate of ATP to the 4'-position of a tetraacyldisaccharide 1-phosphate intermediate (termed DS-1-P) to form tetraacyldisaccharide 1,4'-bis-phosphate (lipid IVA). The protein is Tetraacyldisaccharide 4'-kinase of Actinobacillus pleuropneumoniae serotype 5b (strain L20).